We begin with the raw amino-acid sequence, 393 residues long: Lipid-A-disaccharide synthase (393 aa).

This sequence belongs to the LpxB family.

It carries out the reaction a lipid X + a UDP-2-N,3-O-bis[(3R)-3-hydroxyacyl]-alpha-D-glucosamine = a lipid A disaccharide + UDP + H(+). It functions in the pathway bacterial outer membrane biogenesis; LPS lipid A biosynthesis. Functionally, condensation of UDP-2,3-diacylglucosamine and 2,3-diacylglucosamine-1-phosphate to form lipid A disaccharide, a precursor of lipid A, a phosphorylated glycolipid that anchors the lipopolysaccharide to the outer membrane of the cell. This chain is Lipid-A-disaccharide synthase, found in Actinobacillus pleuropneumoniae serotype 7 (strain AP76).